The sequence spans 217 residues: Uracil-DNA glycosylase (217 aa).

Residue Asp-62 is the Proton acceptor of the active site.

The protein belongs to the uracil-DNA glycosylase (UDG) superfamily. UNG family.

The protein localises to the cytoplasm. It catalyses the reaction Hydrolyzes single-stranded DNA or mismatched double-stranded DNA and polynucleotides, releasing free uracil.. Excises uracil residues from the DNA which can arise as a result of misincorporation of dUMP residues by DNA polymerase or due to deamination of cytosine. This is Uracil-DNA glycosylase from Streptococcus pneumoniae (strain Hungary19A-6).